Consider the following 139-residue polypeptide: Membrane protein YqfB (139 aa).

The chain crosses the membrane as a helical span at residues 3–23; the sequence is DLLTNPLIIAAIIGIISAIFG. Positions 25–87 are disordered; it reads KSKEEKQNSQ…TARNLKGLER (63 aa). Residues 62–97 are a coiled coil; the sequence is NRMEQARREAEERRRETARNLKGLERDLAAAKQKTV. Residues 65 to 87 are compositionally biased toward basic and acidic residues; that stretch reads EQARREAEERRRETARNLKGLER.

It is found in the cell membrane. In Bacillus subtilis (strain 168), this protein is Membrane protein YqfB (yqfB).